We begin with the raw amino-acid sequence, 465 residues long: E3 ubiquitin-protein ligase parkin (465 aa).

The Ubiquitin-like domain maps to 1–76; the sequence is MIVFVRFNSS…VHIVQRPQRK (76 aa). A Phosphoserine; by PINK1 modification is found at Ser65. The disordered stretch occupies residues 71–96; the sequence is QRPQRKSHETNASGGDKPQSTPEGSI. The necessary for PINK1-dependent localization to mitochondria stretch occupies residues 77–237; sequence SHETNASGGD…LITNNSRSIP (161 aa). Thr80 is subject to Phosphothreonine. A compositionally biased stretch (polar residues) spans 80-93; sequence TNASGGDKPQSTPE. Residues 141–225 form an RING-type 0; atypical zinc finger; it reads PTYHSFFVYC…PTSDKDTSVA (85 aa). The residue at position 175 (Thr175) is a Phosphothreonine; by PINK1. The SYT11 binding 1 stretch occupies residues 204–238; that stretch reads TRAEFFFKCGAHPTSDKDTSVALNLITNNSRSIPC. Thr217 carries the phosphothreonine modification. Residues 234 to 465 are TRIAD supradomain; that stretch reads RSIPCIACTD…ACMGDHWFDV (232 aa). Residues Cys238, Cys241, Cys253, His257, Cys260, Cys263, Cys289, Cys293, Cys332, and Cys337 each coordinate Zn(2+). Residues 238 to 293 form an RING-type 1 zinc finger; that stretch reads CIACTDVRNPVLVFQCNHRHVICLDCFHLYCVTRLNDRQFVHDAQLGYSLPCVAGC. An SYT11 binding 2 region spans residues 257–293; the sequence is HVICLDCFHLYCVTRLNDRQFVHDAQLGYSLPCVAGC. The IBR-type zinc-finger motif lies at 313–377; sequence NRYQQYGAEE…CKEAYHEGEC (65 aa). Residue Lys349 forms a Glycyl lysine isopeptide (Lys-Gly) (interchain with G-Cter in ISG15) linkage. The Zn(2+) site is built by Cys352, Cys360, Cys365, and Cys368. Residue Lys369 forms a Glycyl lysine isopeptide (Lys-Gly) (interchain with G-Cter in ISG15) linkage. His373 and Cys377 together coordinate Zn(2+). The tract at residues 378 to 410 is REP; that stretch reads DSMFEASGATSQAYRVDQRAAEQARWEEASKET. Residues Cys418 and Cys421 each coordinate Zn(2+). Residues 418 to 449 form an RING-type 2; atypical zinc finger; that stretch reads CPRCNVPIEKNGGCMHMKCPQPQCKLEWCWNC. Cys431 is an active-site residue. Positions 436, 441, 446, 449, 457, and 461 each coordinate Zn(2+).

Belongs to the RBR family. Parkin subfamily. As to quaternary structure, forms an E3 ubiquitin ligase complex with UBE2L3 or UBE2L6. Mediates 'Lys-63'-linked polyubiquitination by associating with UBE2V1. Part of a SCF-like complex, consisting of PRKN, CUL1 and FBXW7. Interacts with SNCAIP. Binds to the C2A and C2B domains of SYT11. Interacts and regulates the turnover of SEPTIN5. Part of a complex, including STUB1, HSP70 and GPR37. The amount of STUB1 in the complex increases during ER stress. STUB1 promotes the dissociation of HSP70 from PRKN and GPR37, thus facilitating PRKN-mediated GPR37 ubiquitination. HSP70 transiently associates with unfolded GPR37 and inhibits the E3 activity of PRKN, whereas, STUB1 enhances the E3 activity of PRKN through promotion of dissociation of HSP70 from PRKN-GPR37 complexes. Interacts with PSMD4 and PACRG. Interacts with LRRK2. Interacts with RANBP2. Interacts with SUMO1 but not SUMO2, which promotes nuclear localization and autoubiquitination. Interacts (via first RING-type domain) with AIMP2 (via N-terminus). Interacts with PSMA7 and RNF41. Interacts with PINK1. Forms a complex with PINK1 and PARK7. Interacts with CHPF, the interaction with isoform 2 may facilitate PRKN transport into the mitochondria. Interacts with MFN2 (phosphorylated), promotes PRKN localization in dysfunctional depolarized mitochondria. Interacts with FBXO7; this promotes translocation to dysfunctional depolarized mitochondria. Interacts with ZNF746. Interacts with heat shock protein 70 family members, including HSPA1L, HSPA1A and HSPA8; interaction HSPA1L promotes translocation to damaged mitochondria. Interacts with BAG4 and, to a lesser extent, BAG5; interaction with BAG4 inhibits translocation to damaged mitochondria. Forms a complex with PRKN and PARK7. Interacts with AMBRA1. Auto-ubiquitinates in an E2-dependent manner leading to its own degradation. Also polyubiquitinated by RNF41 for proteasomal degradation. In terms of processing, S-nitrosylated. Post-translationally, phosphorylated. Activation requires phosphorylation at Ser-65 by PINK1 and binding to PINK1 phosphorylated ubiquitin. Phosphorylation at Thr-175 by PINK1 and at Thr-217 is important for mitochondrial localization. As to expression, largely confined to neuronal elements, including fibers and neuropil. Highly expressed at the forebrain level, in pyramidal cells of layer V, in various cortical regions and cerebellum. Expressed in the nucleus of diagonal band of Broca, nucleus basalis, bed nucleus of the stria terminalis, and olfactory tubercle. Moderate expression is seen in most neurons of the subthalamic nucleus, heart, skeletal muscle and testis. Moderate expression was found in frontal cortex, parietal cortex, cerebellum, heart, skeletal muscle and testis.

Its subcellular location is the cytoplasm. The protein localises to the cytosol. The protein resides in the nucleus. It is found in the endoplasmic reticulum. It localises to the mitochondrion. Its subcellular location is the mitochondrion outer membrane. The protein localises to the cell projection. The protein resides in the neuron projection. It is found in the postsynaptic density. It localises to the presynapse. It catalyses the reaction [E2 ubiquitin-conjugating enzyme]-S-ubiquitinyl-L-cysteine + [acceptor protein]-L-lysine = [E2 ubiquitin-conjugating enzyme]-L-cysteine + [acceptor protein]-N(6)-ubiquitinyl-L-lysine.. It participates in protein modification; protein ubiquitination. With respect to regulation, in the autoinhibited state the side chain of Phe-463 inserts into a hydrophobic groove in RING-0, occluding the ubiquitin acceptor site Cys-431, whereas the REP repressor element binds RING-1 and blocks its E2-binding site. Activation of PRKN requires 2 steps: (1) phosphorylation at Ser-65 by PINK1 and (2) binding to phosphorylated ubiquitin, leading to unlock repression of the catalytic Cys-431 by the RING-0 region via an allosteric mechanism and converting PRKN to its fully-active form. According to another report, phosphorylation at Ser-65 by PINK1 is not essential for activation and only binding to phosphorylated ubiquitin is essential to unlock repression. In addition, ISG15 conjugation positively regulates its ubiquitin E3 ligase activity by suppressing the intramolecular interaction that maintains its autoinhibited conformation. Its function is as follows. Functions within a multiprotein E3 ubiquitin ligase complex, catalyzing the covalent attachment of ubiquitin moieties onto substrate proteins. Substrates include SYT11 and VDAC1. Other substrates are BCL2, CCNE1, GPR37, RHOT1/MIRO1, MFN1, MFN2, STUB1, SNCAIP, SEPTIN5, TOMM20, USP30, ZNF746, MIRO1 and AIMP2. Mediates monoubiquitination as well as 'Lys-6', 'Lys-11', 'Lys-48'-linked and 'Lys-63'-linked polyubiquitination of substrates depending on the context. Participates in the removal and/or detoxification of abnormally folded or damaged protein by mediating 'Lys-63'-linked polyubiquitination of misfolded proteins such as PARK7: 'Lys-63'-linked polyubiquitinated misfolded proteins are then recognized by HDAC6, leading to their recruitment to aggresomes, followed by degradation. Mediates 'Lys-63'-linked polyubiquitination of a 22 kDa O-linked glycosylated isoform of SNCAIP, possibly playing a role in Lewy-body formation. Mediates monoubiquitination of BCL2, thereby acting as a positive regulator of autophagy. Protects against mitochondrial dysfunction during cellular stress, by acting downstream of PINK1 to coordinate mitochondrial quality control mechanisms that remove and replace dysfunctional mitochondrial components. Depending on the severity of mitochondrial damage and/or dysfunction, activity ranges from preventing apoptosis and stimulating mitochondrial biogenesis to regulating mitochondrial dynamics and eliminating severely damaged mitochondria via mitophagy. Activation and recruitment onto the outer membrane of damaged/dysfunctional mitochondria (OMM) requires PINK1-mediated phosphorylation of both PRKN and ubiquitin. After mitochondrial damage, functions with PINK1 to mediate the decision between mitophagy or preventing apoptosis by inducing either the poly- or monoubiquitination of VDAC1, respectively; polyubiquitination of VDAC1 promotes mitophagy, while monoubiquitination of VDAC1 decreases mitochondrial calcium influx which ultimately inhibits apoptosis. When cellular stress results in irreversible mitochondrial damage, promotes the autophagic degradation of dysfunctional depolarized mitochondria (mitophagy) by promoting the ubiquitination of mitochondrial proteins such as TOMM20, RHOT1/MIRO1, MFN1 and USP30. Preferentially assembles 'Lys-6'-, 'Lys-11'- and 'Lys-63'-linked polyubiquitin chains, leading to mitophagy. The PINK1-PRKN pathway also promotes fission of damaged mitochondria by PINK1-mediated phosphorylation which promotes the PRKN-dependent degradation of mitochondrial proteins involved in fission such as MFN2. This prevents the refusion of unhealthy mitochondria with the mitochondrial network or initiates mitochondrial fragmentation facilitating their later engulfment by autophagosomes. Regulates motility of damaged mitochondria via the ubiquitination and subsequent degradation of MIRO1 and MIRO2; in motor neurons, this likely inhibits mitochondrial intracellular anterograde transport along the axons which probably increases the chance of the mitochondria undergoing mitophagy in the soma. Involved in mitochondrial biogenesis via the 'Lys-48'-linked polyubiquitination of transcriptional repressor ZNF746/PARIS which leads to its subsequent proteasomal degradation and allows activation of the transcription factor PPARGC1A. Limits the production of reactive oxygen species (ROS). Regulates cyclin-E during neuronal apoptosis. In collaboration with CHPF isoform 2, may enhance cell viability and protect cells from oxidative stress. Independently of its ubiquitin ligase activity, protects from apoptosis by the transcriptional repression of p53/TP53. May protect neurons against alpha synuclein toxicity, proteasomal dysfunction, GPR37 accumulation, and kainate-induced excitotoxicity. May play a role in controlling neurotransmitter trafficking at the presynaptic terminal and in calcium-dependent exocytosis. May represent a tumor suppressor gene. The protein is E3 ubiquitin-protein ligase parkin of Rattus norvegicus (Rat).